A 218-amino-acid polypeptide reads, in one-letter code: Probable cutinase 3 (218 aa).

Positions Met-1–Ala-17 are cleaved as a signal peptide. Intrachain disulfides connect Cys-41–Cys-120 and Cys-67–Cys-81. The active-site Nucleophile is the Ser-131. Cys-182 and Cys-189 are oxidised to a cystine. Asp-186 is a catalytic residue. His-199 serves as the catalytic Proton donor/acceptor.

This sequence belongs to the cutinase family.

The protein localises to the secreted. The enzyme catalyses cutin + H2O = cutin monomers.. Functionally, catalyzes the hydrolysis of complex carboxylic polyesters found in the cell wall of plants. Degrades cutin, a macromolecule that forms the structure of the plant cuticle. The chain is Probable cutinase 3 from Aspergillus terreus (strain NIH 2624 / FGSC A1156).